Consider the following 157-residue polypeptide: UPF0756 membrane protein ABC2716 (157 aa).

4 consecutive transmembrane segments (helical) span residues phenylalanine 8–isoleucine 28, leucine 54–phenylalanine 74, leucine 84–isoleucine 104, and leucine 117–isoleucine 137.

The protein belongs to the UPF0756 family.

Its subcellular location is the cell membrane. This is UPF0756 membrane protein ABC2716 from Shouchella clausii (strain KSM-K16) (Alkalihalobacillus clausii).